Reading from the N-terminus, the 311-residue chain is Methionyl-tRNA formyltransferase (311 aa).

110–113 (SLLP) contributes to the (6S)-5,6,7,8-tetrahydrofolate binding site.

Belongs to the Fmt family.

It catalyses the reaction L-methionyl-tRNA(fMet) + (6R)-10-formyltetrahydrofolate = N-formyl-L-methionyl-tRNA(fMet) + (6S)-5,6,7,8-tetrahydrofolate + H(+). In terms of biological role, attaches a formyl group to the free amino group of methionyl-tRNA(fMet). The formyl group appears to play a dual role in the initiator identity of N-formylmethionyl-tRNA by promoting its recognition by IF2 and preventing the misappropriation of this tRNA by the elongation apparatus. The polypeptide is Methionyl-tRNA formyltransferase (Streptococcus sanguinis (strain SK36)).